A 1033-amino-acid polypeptide reads, in one-letter code: RNA cytidine acetyltransferase (1033 aa).

Residues 285 to 294 (GRGKSAALGL) and Arg465 contribute to the ATP site. In terms of domain architecture, N-acetyltransferase spans 560–694 (VDLKNPKLPD…IHVRDAKTMP (135 aa)). Residues 626–628 (IAV), 633–639 (VKMGYGT), and Arg727 each bind acetyl-CoA. The tract at residues 988–1033 (ENQIQKTNGKGARVVSIKGEKRKNNSLDASDKKTKEKPSSKKKFRK) is disordered. Residues 1005–1026 (KGEKRKNNSLDASDKKTKEKPS) show a composition bias toward basic and acidic residues.

The protein belongs to the RNA cytidine acetyltransferase family. NAT10 subfamily. Interacts with tan1.

The protein resides in the nucleus. It localises to the nucleolus. The enzyme catalyses a cytidine in 18S rRNA + acetyl-CoA + ATP + H2O = an N(4)-acetylcytidine in 18S rRNA + ADP + phosphate + CoA + H(+). The catalysed reaction is a cytidine in tRNA + acetyl-CoA + ATP + H2O = an N(4)-acetylcytidine in tRNA + ADP + phosphate + CoA + H(+). Functionally, RNA cytidine acetyltransferase with specificity toward both 18S rRNA and tRNAs. Catalyzes the formation of N(4)-acetylcytidine (ac4C) at positions 1297 and 1815 in 18S rRNA. Required for early nucleolar cleavages of precursor rRNA at sites A0, A1 and A2 during 18S rRNA synthesis. Catalyzes the formation of ac4C in serine and leucine tRNAs. Requires the tRNA-binding adapter protein tan1 for full tRNA acetyltransferase activity but not for 18S rRNA acetylation. The sequence is that of RNA cytidine acetyltransferase from Schizosaccharomyces pombe (strain 972 / ATCC 24843) (Fission yeast).